Here is a 246-residue protein sequence, read N- to C-terminus: MQWIDDGLVIGLRKHGETGVVLELMTPEHGRHLGLVHGGRSRRMQPMLQPGNTLRATWRARLDGALGAYAVEPLTLNASRLMDSGLALYGVAHLSALLRLLPERDPHPALYEAAQILIAHLDDPEIAPALMVRFELALLAGLGFGLDLSHCAATGANDALVYVSPKSGRAVSASAGEPFRDRLLPLPPFLRDRDQPGSGWRTPDTHDVREGFTLTGYFLDQHVWRPRAQDTPEERARFVALGTGQS.

This sequence belongs to the RecO family.

Its function is as follows. Involved in DNA repair and RecF pathway recombination. This Methylorubrum extorquens (strain PA1) (Methylobacterium extorquens) protein is DNA repair protein RecO.